Here is a 366-residue protein sequence, read N- to C-terminus: Prostaglandin F2-alpha receptor (366 aa).

At 1–31 the chain is on the extracellular side; that stretch reads MSMNSSKQPVSPAAGLIANTTCQTENRLSVF. N-linked (GlcNAc...) asparagine glycans are attached at residues N4 and N19. The helical transmembrane segment at 32–55 threads the bilayer; it reads FSIIFMTVGILSNSLAIAILMKAY. Topologically, residues 56 to 69 are cytoplasmic; that stretch reads QRFRQKSKASFLLL. The helical transmembrane segment at 70-90 threads the bilayer; the sequence is ASGLVITDFFGHLINGGIAVF. Topologically, residues 91–109 are extracellular; the sequence is VYASDKDWIRFDQSNILCS. C108 and C186 are oxidised to a cystine. The helical transmembrane segment at 110-131 threads the bilayer; it reads IFGISMVFSGLCPLFLGSAMAI. Residues 132-152 lie on the Cytoplasmic side of the membrane; that stretch reads ERCIGVTNPIFHSTKITSKHV. A helical membrane pass occupies residues 153–175; that stretch reads KMILSGVCMFAVFVAVLPILGHR. The Extracellular segment spans residues 176–198; it reads DYQIQASRTWCFYNTEHIEDWED. Residues 199 to 224 traverse the membrane as a helical segment; it reads RFYLLFFSFLGLLALGVSFSCNAVTG. At 225–250 the chain is on the cytoplasmic side; sequence VTLLRVKFRSQQHRQGRSHHLEMIIQ. Residues 251–267 traverse the membrane as a helical segment; the sequence is LLAIMCVSCVCWSPFLV. The Extracellular portion of the chain corresponds to 268–285; that stretch reads TMANIAINGNNSPVTCET. A helical transmembrane segment spans residues 286–307; that stretch reads TLFALRMATWNQILDPWVYILL. The Cytoplasmic segment spans residues 308-366; it reads RKAVLRNLYKLASRCCGVNIISLHIWELSSIKNSLKVAAISESPAAEKESQQASSEAGL.

Belongs to the G-protein coupled receptor 1 family.

The protein localises to the cell membrane. Its function is as follows. Receptor for prostaglandin F2-alpha (PGF2-alpha). The activity of this receptor is mediated by G proteins which activate a phosphatidylinositol-calcium second messenger system. Initiates luteolysis in the corpus luteum. In Mus musculus (Mouse), this protein is Prostaglandin F2-alpha receptor (Ptgfr).